The sequence spans 438 residues: Adenylyltransferase and sulfurtransferase MOCS3 (438 aa).

ATP-binding positions include glycine 80, aspartate 101, 108–112 (TNLHR), lysine 125, and 169–170 (DN). Residues cysteine 210 and cysteine 213 each contribute to the Zn(2+) site. The active-site Glycyl thioester intermediate; for adenylyltransferase activity is the cysteine 227. Zn(2+) contacts are provided by cysteine 285 and cysteine 288. One can recognise a Rhodanese domain in the interval 335–436 (SKQRHVLVDV…WTRNVDKEFP (102 aa)). Residue cysteine 392 is the Cysteine persulfide intermediate; for sulfurtransferase activity of the active site.

In the N-terminal section; belongs to the HesA/MoeB/ThiF family. UBA4 subfamily. Zn(2+) is required as a cofactor.

The protein resides in the cytoplasm. It is found in the cytosol. It carries out the reaction [molybdopterin-synthase sulfur-carrier protein]-C-terminal Gly-Gly + ATP + H(+) = [molybdopterin-synthase sulfur-carrier protein]-C-terminal Gly-Gly-AMP + diphosphate. The catalysed reaction is [molybdopterin-synthase sulfur-carrier protein]-C-terminal Gly-Gly-AMP + S-sulfanyl-L-cysteinyl-[cysteine desulfurase] + AH2 = [molybdopterin-synthase sulfur-carrier protein]-C-terminal-Gly-aminoethanethioate + L-cysteinyl-[cysteine desulfurase] + A + AMP + 2 H(+). It participates in tRNA modification; 5-methoxycarbonylmethyl-2-thiouridine-tRNA biosynthesis. The protein operates within cofactor biosynthesis; molybdopterin biosynthesis. Its function is as follows. Plays a central role in 2-thiolation of mcm(5)S(2)U at tRNA wobble positions of cytosolic tRNA(Lys), tRNA(Glu) and tRNA(Gln). Also essential during biosynthesis of the molybdenum cofactor. Acts by mediating the C-terminal thiocarboxylation of sulfur carriers URM1 and MOCS2A. Its N-terminus first activates URM1 and MOCS2A as acyl-adenylates (-COAMP), then the persulfide sulfur on the catalytic cysteine is transferred to URM1 and MOCS2A to form thiocarboxylation (-COSH) of their C-terminus. The reaction probably involves hydrogen sulfide that is generated from the persulfide intermediate and that acts as a nucleophile towards URM1 and MOCS2A. Subsequently, a transient disulfide bond is formed. Does not use thiosulfate as sulfur donor; NFS1 probably acting as a sulfur donor for thiocarboxylation reactions. The sequence is that of Adenylyltransferase and sulfurtransferase MOCS3 from Culex quinquefasciatus (Southern house mosquito).